The sequence spans 190 residues: Isopentenyl-diphosphate Delta-isomerase (190 aa).

Residues H27 and H34 each coordinate Mn(2+). The region spanning 32–166 (ALHLAFSCHV…PWAFSPWLTL (135 aa)) is the Nudix hydrolase domain. The active site involves C69. H71 contributes to the Mn(2+) binding site. E89 contributes to the Mg(2+) binding site. Positions 116 and 118 each coordinate Mn(2+). Residue E118 is part of the active site.

The protein belongs to the IPP isomerase type 1 family. Mg(2+) is required as a cofactor. The cofactor is Mn(2+).

The protein resides in the cytoplasm. It catalyses the reaction isopentenyl diphosphate = dimethylallyl diphosphate. It participates in isoprenoid biosynthesis; dimethylallyl diphosphate biosynthesis; dimethylallyl diphosphate from isopentenyl diphosphate: step 1/1. Functionally, catalyzes the 1,3-allylic rearrangement of the homoallylic substrate isopentenyl (IPP) to its highly electrophilic allylic isomer, dimethylallyl diphosphate (DMAPP). The protein is Isopentenyl-diphosphate Delta-isomerase of Clavibacter sepedonicus (Clavibacter michiganensis subsp. sepedonicus).